We begin with the raw amino-acid sequence, 463 residues long: MDQRGEDTTLAPHSRMSGDQTAQDPGSSLGELDQQNVVNRVVALPLVKATCTAVSSAYNSAKDRHPLLGSACRLAEHCVCSVTTCALDHAQPLLEHLQPQLATVNDLACRGLDKLEEKLPFLQQPSDMVVTSAKDTVAKSVTGMVDLAQRGRRWSGELRRSMSQAMDMVLGKSEKLVDRFLPMTEAELAVLAAEAEGPEVGTVEEQRQQQGYFVRLGSLSARLRHLAYEHSLGKLRQSKHRTQEMLAQLQETLELIQHMQRGASPSPTFHPPKTQELWGSWSPCLENGRSHSEVELETLALSRSLTLELQNAVDALAGCVRGLPPSAQAKVAEVQRSVDALQATFADAHCLGDVAPTALAEGRGSVARAHACVDEFLDLVLRAMPLPWLVGPFAPILVEQSEPLINLATCVDEVVGDPDPRWAHMDWPAQKRAWEAESADPGGQEAEPPRGQGKHTMMPELDF.

The tract at residues 1–32 (MDQRGEDTTLAPHSRMSGDQTAQDPGSSLGEL) is disordered. The interaction with LIPE stretch occupies residues 1–123 (MDQRGEDTTL…KLEEKLPFLQ (123 aa)). Residues 1–188 (MDQRGEDTTL…RFLPMTEAEL (188 aa)) form an essential for lipid droplet targeting region. S17, S163, and S337 each carry phosphoserine. Polar residues predominate over residues 17–26 (SGDQTAQDPG). Residues 200–463 (VGTVEEQRQQ…KHTMMPELDF (264 aa)) are interaction with PNPLA2 and ABHD5. The disordered stretch occupies residues 433–463 (AWEAESADPGGQEAEPPRGQGKHTMMPELDF). The necessary for mitochondria recruitment at the lipid droplet surface stretch occupies residues 444–463 (QEAEPPRGQGKHTMMPELDF).

Belongs to the perilipin family. Homooligomer. Interacts with PNPLA2; prevents interaction of PNPLA2 with ABHD5. Interacts with ABHD5; targets ABHD5 to lipid droplets and promotes interaction of ABHD5 with PNPLA2. Interacts with LIPE. In terms of processing, phosphorylated by PKA. Phosphorylated on serine in skeletal muscle at rest or with lipolytic stimulation. Highly expressed in oxidative tissues, including heart, liver, brown adipose tissue (BAT) and slow-twitch fibers of skeletal muscle. Lower expression in epididymal white adipose tissue and anterior tibialis and quadriceps. Expressed in adrenal glands. Isoform 2 has the highest expression in heart.

The protein localises to the lipid droplet. The protein resides in the cytoplasm. It localises to the mitochondrion. In terms of biological role, lipid droplet-associated protein that maintains the balance between lipogenesis and lipolysis and also regulates fatty acid oxidation in oxidative tissues. Recruits mitochondria to the surface of lipid droplets and is involved in lipid droplet homeostasis by regulating both the storage of fatty acids in the form of triglycerides and the release of fatty acids for mitochondrial fatty acid oxidation. In lipid droplet triacylglycerol hydrolysis, plays a role as a scaffolding protein for three major key lipolytic players: ABHD5, PNPLA2 and LIPE. Reduces the triacylglycerol hydrolase activity of PNPLA2 by recruiting and sequestering PNPLA2 to lipid droplets. Phosphorylation by PKA enables lipolysis probably by promoting release of ABHD5 from the perilipin scaffold and by facilitating interaction of ABHD5 with PNPLA2. Also increases lipolysis through interaction with LIPE and upon PKA-mediated phosphorylation of LIPE. The sequence is that of Perilipin-5 (Plin5) from Mus musculus (Mouse).